Consider the following 568-residue polypeptide: Urease subunit alpha (568 aa).

Residues 130-568 form the Urease domain; the sequence is GGIDSHIHFI…LPMAQRYFLF (439 aa). Histidine 135, histidine 137, and lysine 218 together coordinate Ni(2+). Residue lysine 218 is modified to N6-carboxylysine. Position 220 (histidine 220) interacts with substrate. 2 residues coordinate Ni(2+): histidine 247 and histidine 273. Histidine 321 functions as the Proton donor in the catalytic mechanism. Aspartate 361 provides a ligand contact to Ni(2+).

It belongs to the metallo-dependent hydrolases superfamily. Urease alpha subunit family. In terms of assembly, heterotrimer of UreA (gamma), UreB (beta) and UreC (alpha) subunits. Three heterotrimers associate to form the active enzyme. Ni cation serves as cofactor. Carboxylation allows a single lysine to coordinate two nickel ions.

Its subcellular location is the cytoplasm. The enzyme catalyses urea + 2 H2O + H(+) = hydrogencarbonate + 2 NH4(+). It functions in the pathway nitrogen metabolism; urea degradation; CO(2) and NH(3) from urea (urease route): step 1/1. The sequence is that of Urease subunit alpha from Nitrosospira multiformis (strain ATCC 25196 / NCIMB 11849 / C 71).